Consider the following 92-residue polypeptide: Elongation factor 1-beta (92 aa).

It belongs to the EF-1-beta/EF-1-delta family.

Its function is as follows. Promotes the exchange of GDP for GTP in EF-1-alpha/GDP, thus allowing the regeneration of EF-1-alpha/GTP that could then be used to form the ternary complex EF-1-alpha/GTP/AAtRNA. This Korarchaeum cryptofilum (strain OPF8) protein is Elongation factor 1-beta.